The sequence spans 235 residues: 6-phosphogluconolactonase (235 aa).

Belongs to the glucosamine/galactosamine-6-phosphate isomerase family. 6-phosphogluconolactonase subfamily.

It carries out the reaction 6-phospho-D-glucono-1,5-lactone + H2O = 6-phospho-D-gluconate + H(+). The protein operates within carbohydrate degradation; pentose phosphate pathway; D-ribulose 5-phosphate from D-glucose 6-phosphate (oxidative stage): step 2/3. Its function is as follows. Hydrolysis of 6-phosphogluconolactone to 6-phosphogluconate. The sequence is that of 6-phosphogluconolactonase (pgl) from Borreliella burgdorferi (strain ATCC 35210 / DSM 4680 / CIP 102532 / B31) (Borrelia burgdorferi).